The primary structure comprises 90 residues: Antitoxin VapB35 (90 aa).

The segment at 53 to 90 (GSVQPARVHGPAPRPTIPMRGGLDSGTLLERMRAEERY) is disordered.

The protein belongs to the phD/YefM antitoxin family.

Its function is as follows. Antitoxin component of a type II toxin-antitoxin (TA) system. Neutralizes the effect of cognate toxin VapC35. The sequence is that of Antitoxin VapB35 (vapB35) from Mycobacterium tuberculosis (strain CDC 1551 / Oshkosh).